The following is a 481-amino-acid chain: NADH-quinone oxidoreductase subunit N (481 aa).

13 helical membrane-spanning segments follow: residues 9–29 (MLPE…GIVV), 39–59 (AVSM…DHVA), 76–96 (CISR…FLCA), 104–124 (FSVV…AGHF), 158–178 (FFIL…LVYG), 205–225 (AFVL…MWAV), 232–252 (PMAA…LLLA), 265–285 (ILYG…LGAL), 293–313 (LLAY…VLHG), 318–338 (AIFH…SVLL), 359–379 (FVAF…PFLG), 399–419 (VAFP…FYCF), and 443–463 (LGLT…LFLA).

It belongs to the complex I subunit 2 family. In terms of assembly, NDH-1 is composed of 14 different subunits. Subunits NuoA, H, J, K, L, M, N constitute the membrane sector of the complex.

It is found in the cell inner membrane. The catalysed reaction is a quinone + NADH + 5 H(+)(in) = a quinol + NAD(+) + 4 H(+)(out). Functionally, NDH-1 shuttles electrons from NADH, via FMN and iron-sulfur (Fe-S) centers, to quinones in the respiratory chain. The immediate electron acceptor for the enzyme in this species is believed to be ubiquinone. Couples the redox reaction to proton translocation (for every two electrons transferred, four hydrogen ions are translocated across the cytoplasmic membrane), and thus conserves the redox energy in a proton gradient. This Anaplasma marginale (strain Florida) protein is NADH-quinone oxidoreductase subunit N.